Here is a 513-residue protein sequence, read N- to C-terminus: Xylose import ATP-binding protein XylG (513 aa).

ABC transporter domains are found at residues 5–242 (LEMK…VGRE) and 259–505 (LRIE…LRSE). Residue 37 to 44 (GENGSGKS) coordinates ATP.

The protein belongs to the ABC transporter superfamily. Xylose importer (TC 3.A.1.2.4) family. The complex is composed of two ATP-binding proteins (XylG), two transmembrane proteins (XylH) and a solute-binding protein (XylF).

The protein resides in the cell inner membrane. It catalyses the reaction D-xylose(out) + ATP + H2O = D-xylose(in) + ADP + phosphate + H(+). Its function is as follows. Part of the ABC transporter complex XylFGH involved in xylose import. Responsible for energy coupling to the transport system. The XylFGH system can also transport ribose in absence of xylose. This chain is Xylose import ATP-binding protein XylG, found in Escherichia coli (strain K12).